Consider the following 328-residue polypeptide: NADH:quinone reductase (328 aa).

FMN-binding positions include 22-24 (GMQ), threonine 75, lysine 124, alanine 150, 178-180 (SGG), and 201-202 (GT).

The protein belongs to the nitronate monooxygenase family. In terms of assembly, monomer. The cofactor is FMN.

It carries out the reaction a quinone + NADH + H(+) = a quinol + NAD(+). In terms of biological role, catalyzes the NADH-dependent reduction of a broad spectrum of quinone substrates, generating the corresponding hydroquinones. Highly prefers NADH to NADPH as a reducing substrate. Also displays a small NADH oxidase activity. Does not exhibit nitronate monooxygenase activity; is inactive against propionate 3-nitronate, 3-nitropropionate, nitroethane, 1-nitropropane, 2-nitropropane, and the anionic forms ethylnitronate, propyl-1-nitronate, and propyl-2-nitronate. Has no azoreductase activity since it is not able to reduce the azo dye methyl red with NADH. May be required to maintain an appropriate [NAD(+)]/[NADH] ratio for the catabolism of fatty acids in P.aeruginosa PAO1. The chain is NADH:quinone reductase from Pseudomonas aeruginosa (strain ATCC 15692 / DSM 22644 / CIP 104116 / JCM 14847 / LMG 12228 / 1C / PRS 101 / PAO1).